The following is a 776-amino-acid chain: FT-interacting protein 4 (776 aa).

A compositionally biased stretch (basic and acidic residues) spans 1-16 (MQRPPPEDFSLKETKP). Residues 1–23 (MQRPPPEDFSLKETKPHLGGGKV) are disordered. C2 domains lie at 22–142 (KVTG…PQWY), 181–305 (VSGT…SRWF), and 346–474 (YSSD…THSY). Ca(2+) contacts are provided by D55, D61, D108, D110, and D115. Helical transmembrane passes span 577–597 (IMGV…ICVW), 608–628 (ILFI…FLYL), and 719–739 (LFVL…FQVV).

The protein belongs to the MCTP family. As to quaternary structure, interacts with and regulates subcellular localization and trafficking of STM. Requires Ca(2+) as cofactor. In terms of tissue distribution, highly expressed in both vegetative and inflorescence shoot apical meristems (SAMs). Accumulates in root meristems. Observed in flowers.

The protein resides in the endoplasmic reticulum membrane. The protein localises to the cytoplasm. It localises to the vesicle. Its subcellular location is the cell membrane. It is found in the endosome membrane. The protein resides in the golgi apparatus membrane. In terms of biological role, required for proliferation and differentiation of shoot stem cells in the shoot apical meristem (SAM), thus determining the appropriate balance between the maintenance of shoot stem cells and their differentiation into other aboveground plant parts via the control of subcellular localization and intercellular trafficking of STM in the shoot apex. Prevents intracellular trafficking of STM to the plasma membrane in cells in the peripheral shoot meristem region thus facilitating STM recycling to the nucleus to maintain stem cells. May function as a signaling molecule by regulating the trafficking of other regulators. The protein is FT-interacting protein 4 of Arabidopsis thaliana (Mouse-ear cress).